A 338-amino-acid chain; its full sequence is Ketol-acid reductoisomerase (NADP(+)) (338 aa).

One can recognise a KARI N-terminal Rossmann domain in the interval 1–181 (MNVFYDKDAD…GGGRAGIIET (181 aa)). NADP(+) is bound by residues 24–27 (YGSQ), Arg47, and Ser52. The active site involves His107. Gly133 is a binding site for NADP(+). In terms of domain architecture, KARI C-terminal knotted spans 182 to 327 (NFREETETDL…AKLRAMMPWI (146 aa)). Residues Asp190, Glu194, Glu226, and Glu230 each contribute to the Mg(2+) site. Ser251 serves as a coordination point for substrate.

This sequence belongs to the ketol-acid reductoisomerase family. Requires Mg(2+) as cofactor.

The catalysed reaction is (2R)-2,3-dihydroxy-3-methylbutanoate + NADP(+) = (2S)-2-acetolactate + NADPH + H(+). It carries out the reaction (2R,3R)-2,3-dihydroxy-3-methylpentanoate + NADP(+) = (S)-2-ethyl-2-hydroxy-3-oxobutanoate + NADPH + H(+). It functions in the pathway amino-acid biosynthesis; L-isoleucine biosynthesis; L-isoleucine from 2-oxobutanoate: step 2/4. Its pathway is amino-acid biosynthesis; L-valine biosynthesis; L-valine from pyruvate: step 2/4. Involved in the biosynthesis of branched-chain amino acids (BCAA). Catalyzes an alkyl-migration followed by a ketol-acid reduction of (S)-2-acetolactate (S2AL) to yield (R)-2,3-dihydroxy-isovalerate. In the isomerase reaction, S2AL is rearranged via a Mg-dependent methyl migration to produce 3-hydroxy-3-methyl-2-ketobutyrate (HMKB). In the reductase reaction, this 2-ketoacid undergoes a metal-dependent reduction by NADPH to yield (R)-2,3-dihydroxy-isovalerate. In Burkholderia cenocepacia (strain ATCC BAA-245 / DSM 16553 / LMG 16656 / NCTC 13227 / J2315 / CF5610) (Burkholderia cepacia (strain J2315)), this protein is Ketol-acid reductoisomerase (NADP(+)).